Here is a 359-residue protein sequence, read N- to C-terminus: S-geranylgeranyl-glutathione receptor P2RY8 (359 aa).

The Extracellular portion of the chain corresponds to 1–19 (MQVPNSTGPDNATLQMLRN). Residues Asn-5 and Asn-11 are each glycosylated (N-linked (GlcNAc...) asparagine). The helical transmembrane segment at 20–40 (PAIAVALPVVYSLVAAVSIPG) threads the bilayer. Topologically, residues 41 to 57 (NLFSLWVLCRRMGPRSP) are cytoplasmic. A helical transmembrane segment spans residues 58–78 (SVIFMINLSVTDLMLASVLPF). Over 79-88 (QIYYHCNRHH) the chain is Extracellular. Residues 89-109 (WVFGVLLCNVVTVAFYANMYS) traverse the membrane as a helical segment. Over 110–138 (SILTMTCISVERFLGVLYPLSSKRWRRRR) the chain is Cytoplasmic. Residues 139 to 159 (YAVAACAGTWLLLLTALSPLA) form a helical membrane-spanning segment. Over 160 to 187 (RTDLTYPVHALGIITCFDVLKWTMLPSV) the chain is Extracellular. The helical transmembrane segment at 188–208 (AMWAVFLFTIFILLFLIPFVI) threads the bilayer. Topologically, residues 209–237 (TVACYTATILKLLRTEEAHGREQRRRAVG) are cytoplasmic. The helical transmembrane segment at 238–258 (LAAVVLLAFVTCFAPNNFVLL) threads the bilayer. Residues 259–275 (AHIVSRLFYGKSYYHVY) are Extracellular-facing. The chain crosses the membrane as a helical span at residues 276-296 (KLTLCLSCLNNCLDPFVYYFA). The Cytoplasmic portion of the chain corresponds to 297-359 (SREFQLRLRE…PGLQRQESVF (63 aa)). The interval 329–359 (RTTSVRSEAGAHPEGMEGATRPGLQRQESVF) is disordered.

Belongs to the G-protein coupled receptor 1 family. In terms of tissue distribution, barely detectable in normal blood leukocytes. Weaker expression was seen in heart, kidney and lung. Not detected in brain. Expressed in B cells and follicular helper T cells in germinal centers (at protein level).

Its subcellular location is the cell membrane. Functionally, g protein-coupled receptor for S-geranylgeranyl-glutathione (GGG), an endogenous metabolite present in lymphoid tissues. Couples the binding of GGG to the activation of GNA13 and downstream repression of AKT activation in lymphocytes defining their positioning and growth within lymphoid organs. In lymphoid follicles, confines B cells and follicular helper T cells in germinal centers (GCs) in response to GGG local gradients established by GGT5 (via GGG catabolism) and ABCC1 (via extracellular transport) with lower concentrations of GGG found in the follicular dendritic cell network region around which germinal centers are formed. In the bone marrow, also in response to GGG gradients established by GGT5 and ABCC1, it restricts chemotactic transmigration of B cells, T cells and NK cells from blood vessels to the bone marrow parenchyma. Contributes to GNA13-dependent pathway that suppresses GC B cell growth. This Homo sapiens (Human) protein is S-geranylgeranyl-glutathione receptor P2RY8.